Here is a 213-residue protein sequence, read N- to C-terminus: Glycerol-3-phosphate acyltransferase (213 aa).

6 helical membrane-spanning segments follow: residues 2–22 (ITIV…GLWI), 54–74 (MATF…PIMF), 80–100 (SPLI…FAGF), 110–130 (AGVV…VFFG), 143–163 (VTAS…GFIL), and 165–185 (NYDP…IIRH).

This sequence belongs to the PlsY family. Probably interacts with PlsX.

It localises to the cell membrane. It catalyses the reaction an acyl phosphate + sn-glycerol 3-phosphate = a 1-acyl-sn-glycero-3-phosphate + phosphate. It functions in the pathway lipid metabolism; phospholipid metabolism. Catalyzes the transfer of an acyl group from acyl-phosphate (acyl-PO(4)) to glycerol-3-phosphate (G3P) to form lysophosphatidic acid (LPA). This enzyme utilizes acyl-phosphate as fatty acyl donor, but not acyl-CoA or acyl-ACP. This Streptococcus pneumoniae (strain Taiwan19F-14) protein is Glycerol-3-phosphate acyltransferase.